The chain runs to 678 residues: Glycine--tRNA ligase beta subunit (678 aa).

This sequence belongs to the class-II aminoacyl-tRNA synthetase family. Tetramer of two alpha and two beta subunits.

It is found in the cytoplasm. The catalysed reaction is tRNA(Gly) + glycine + ATP = glycyl-tRNA(Gly) + AMP + diphosphate. The sequence is that of Glycine--tRNA ligase beta subunit from Streptococcus pneumoniae (strain 70585).